Consider the following 337-residue polypeptide: UDP-3-O-acylglucosamine N-acyltransferase (337 aa).

His-238 serves as the catalytic Proton acceptor.

This sequence belongs to the transferase hexapeptide repeat family. LpxD subfamily. As to quaternary structure, homotrimer.

The catalysed reaction is a UDP-3-O-[(3R)-3-hydroxyacyl]-alpha-D-glucosamine + a (3R)-hydroxyacyl-[ACP] = a UDP-2-N,3-O-bis[(3R)-3-hydroxyacyl]-alpha-D-glucosamine + holo-[ACP] + H(+). It functions in the pathway bacterial outer membrane biogenesis; LPS lipid A biosynthesis. In terms of biological role, catalyzes the N-acylation of UDP-3-O-acylglucosamine using 3-hydroxyacyl-ACP as the acyl donor. Is involved in the biosynthesis of lipid A, a phosphorylated glycolipid that anchors the lipopolysaccharide to the outer membrane of the cell. This chain is UDP-3-O-acylglucosamine N-acyltransferase, found in Xanthomonas oryzae pv. oryzae (strain KACC10331 / KXO85).